The sequence spans 491 residues: UDP-N-acetylmuramate--L-alanine ligase (491 aa).

An ATP-binding site is contributed by 126 to 132 (GTHGKTT).

Belongs to the MurCDEF family.

The protein localises to the cytoplasm. The enzyme catalyses UDP-N-acetyl-alpha-D-muramate + L-alanine + ATP = UDP-N-acetyl-alpha-D-muramoyl-L-alanine + ADP + phosphate + H(+). The protein operates within cell wall biogenesis; peptidoglycan biosynthesis. In terms of biological role, cell wall formation. This Shigella flexneri protein is UDP-N-acetylmuramate--L-alanine ligase.